A 315-amino-acid chain; its full sequence is Lamassu protein LmuA (315 aa).

In terms of biological role, component of antiviral defense system Lamassu type I, composed of LmuA and LmuB. Expression of Lamassu type I in B.subtilis (strain BEST7003) confers resistance to phages phi3T, SpBeta and SPR. In Bacillus sp. (strain NCIM 5461 / CCTCC AB 2011126 / NIO-1130), this protein is Lamassu protein LmuA.